The sequence spans 588 residues: Adenine deaminase (588 aa).

Belongs to the metallo-dependent hydrolases superfamily. Adenine deaminase family. In terms of assembly, homodimer. Mn(2+) is required as a cofactor.

The catalysed reaction is adenine + H2O + H(+) = hypoxanthine + NH4(+). This is Adenine deaminase from Escherichia coli (strain SMS-3-5 / SECEC).